Consider the following 133-residue polypeptide: Large-conductance mechanosensitive channel (133 aa).

Helical transmembrane passes span 14–34 and 73–93; these read VVDL…VTTL and FITV…MVVV.

It belongs to the MscL family. Homopentamer.

The protein resides in the cell membrane. Channel that opens in response to stretch forces in the membrane lipid bilayer. May participate in the regulation of osmotic pressure changes within the cell. This chain is Large-conductance mechanosensitive channel, found in Renibacterium salmoninarum (strain ATCC 33209 / DSM 20767 / JCM 11484 / NBRC 15589 / NCIMB 2235).